A 131-amino-acid polypeptide reads, in one-letter code: Small ribosomal subunit protein uS11 (131 aa).

The protein belongs to the universal ribosomal protein uS11 family. As to quaternary structure, part of the 30S ribosomal subunit. Interacts with proteins S7 and S18. Binds to IF-3.

Its function is as follows. Located on the platform of the 30S subunit, it bridges several disparate RNA helices of the 16S rRNA. Forms part of the Shine-Dalgarno cleft in the 70S ribosome. In Saccharophagus degradans (strain 2-40 / ATCC 43961 / DSM 17024), this protein is Small ribosomal subunit protein uS11.